Here is a 535-residue protein sequence, read N- to C-terminus: Secreted lipase 5 (535 aa).

The signal sequence occupies residues 1–17; sequence MHLKSLLLAALPLLLEA. N-linked (GlcNAc...) asparagine glycosylation is found at Asn32 and Asn119. The Acyl-ester intermediate role is filled by Ser241. 4 N-linked (GlcNAc...) asparagine glycosylation sites follow: Asn282, Asn341, Asn347, and Asn432.

Belongs to the type-B carboxylesterase/lipase family.

The protein resides in the secreted. The catalysed reaction is a carboxylic ester + H2O = an alcohol + a carboxylate + H(+). In terms of biological role, secreted lipase involved in plant virulence. Has a substrate preference for p-nitrophenyl esters with a carbon chain length of C8 (p-nitrophenyl caprylate). In Gibberella zeae (strain ATCC MYA-4620 / CBS 123657 / FGSC 9075 / NRRL 31084 / PH-1) (Wheat head blight fungus), this protein is Secreted lipase 5.